A 142-amino-acid chain; its full sequence is Hemoglobin subunit alpha (142 aa).

Residues 2–142 (VLSAADKNNV…VSTVLTSKYR (141 aa)) form the Globin domain. Position 4 is a phosphoserine (S4). 2 positions are modified to N6-succinyllysine: K8 and K12. K17 is subject to N6-acetyllysine; alternate. K17 is modified (N6-succinyllysine; alternate). Y25 carries the phosphotyrosine modification. S36 is subject to Phosphoserine. N6-succinyllysine is present on K41. Phosphoserine is present on S50. An O2-binding site is contributed by H59. Residue H88 coordinates heme b. T109 is subject to Phosphothreonine. Phosphoserine is present on residues S125 and S132. Phosphothreonine is present on residues T135 and T138. Phosphoserine is present on S139.

It belongs to the globin family. Heterotetramer of two alpha chains and two beta chains. As to expression, red blood cells.

Involved in oxygen transport from the lung to the various peripheral tissues. Its function is as follows. Hemopressin acts as an antagonist peptide of the cannabinoid receptor CNR1. Hemopressin-binding efficiently blocks cannabinoid receptor CNR1 and subsequent signaling. In Cavia porcellus (Guinea pig), this protein is Hemoglobin subunit alpha (HBA).